A 688-amino-acid chain; its full sequence is MLVLFLLLTIPTRAQRTTTETPKTEFIFRGFSGNQSNIVTTGAATIKLDGLLRLTDRNSNVTGTSFYHKPVRLLETNTSSTNSTIRSFSTSFVFVIIPTSSSNGGFGFTFTLSPTPDRTGAESAQYLGLLNKANDGNSTNHVFAVEFDTVQGFKDGADRTGNHIGLNFNSLTSDVQEPVVYYDNEDPNRKEDFPLQSGDPIRAILDYDGPTQTLNLTVYPANLKSRPVRPLISRPVPKLSQIVQEEMYVGFTAATGRDQSSAHYVMGWSFSSGGDLLTEDTLDLLELPRPPPNTAKKRGYNSQVLALIVALSGVTVILLALLFFFVMYKKRLQQGEVLEDWEINHPHRLRYKDLYAATDGFKENRIVGTGGFGTVFRGNLSSPSSDQIAVKKITPNSMQGVREFIAEIESLGRLRHKNLVNLQGWCKQKNDLLLIYDYIPNGSLDSLLYSRPRQSGVVLSWNARFKIAKGIASGLLYLHEEWEKVVIHRDIKPSNVLIEDDMNPRLGDFGLARLYERGSQSNTTVVVGTIGYMAPELARNGKSSSASDVFAFGVLLLEIVSGRRPTDSGTFFLADWVMELHARGEILHAVDPRLGFGYDGVEARLALVVGLLCCHQRPTSRPSMRTVLRYLNGDDDVPEIDNDWGYSDSSRSDLGSNFEGYVSSDRASSSVPSFSVTRVSSSSVISGR.

The signal sequence occupies residues 1 to 14 (MLVLFLLLTIPTRA). At 15–306 (QRTTTETPKT…KRGYNSQVLA (292 aa)) the chain is on the extracellular side. A legume-lectin like region spans residues 22–271 (PKTEFIFRGF…AHYVMGWSFS (250 aa)). A helical membrane pass occupies residues 307-327 (LIVALSGVTVILLALLFFFVM). The Cytoplasmic segment spans residues 328 to 688 (YKKRLQQGEV…VSSSSVISGR (361 aa)). Residues 361–640 (FKENRIVGTG…LNGDDDVPEI (280 aa)) form the Protein kinase domain. Residues 367–375 (VGTGGFGTV) and lysine 391 contribute to the ATP site. The active-site Proton acceptor is the aspartate 490. A disordered region spans residues 662 to 688 (VSSDRASSSVPSFSVTRVSSSSVISGR).

In the C-terminal section; belongs to the protein kinase superfamily. Ser/Thr protein kinase family. This sequence in the N-terminal section; belongs to the leguminous lectin family.

It is found in the cell membrane. The enzyme catalyses L-seryl-[protein] + ATP = O-phospho-L-seryl-[protein] + ADP + H(+). The catalysed reaction is L-threonyl-[protein] + ATP = O-phospho-L-threonyl-[protein] + ADP + H(+). Functionally, involved in negative regulation of abscisic acid response in seed germination. The chain is Lectin-domain containing receptor kinase VI.3 (LECRK63) from Arabidopsis thaliana (Mouse-ear cress).